The following is a 72-amino-acid chain: Translation initiation factor IF-1 (72 aa).

An S1-like domain is found at 1-72; it reads MAKDDVIEIE…TKGRITYRFK (72 aa).

The protein belongs to the IF-1 family. In terms of assembly, component of the 30S ribosomal translation pre-initiation complex which assembles on the 30S ribosome in the order IF-2 and IF-3, IF-1 and N-formylmethionyl-tRNA(fMet); mRNA recruitment can occur at any time during PIC assembly.

The protein resides in the cytoplasm. Its function is as follows. One of the essential components for the initiation of protein synthesis. Stabilizes the binding of IF-2 and IF-3 on the 30S subunit to which N-formylmethionyl-tRNA(fMet) subsequently binds. Helps modulate mRNA selection, yielding the 30S pre-initiation complex (PIC). Upon addition of the 50S ribosomal subunit IF-1, IF-2 and IF-3 are released leaving the mature 70S translation initiation complex. This Ligilactobacillus salivarius (strain UCC118) (Lactobacillus salivarius) protein is Translation initiation factor IF-1.